We begin with the raw amino-acid sequence, 388 residues long: Nitric oxide reductase FlRd-NAD(+) reductase (388 aa).

Belongs to the FAD-dependent oxidoreductase family. The cofactor is FAD.

The protein resides in the cytoplasm. The enzyme catalyses 2 reduced [nitric oxide reductase rubredoxin domain] + NAD(+) + H(+) = 2 oxidized [nitric oxide reductase rubredoxin domain] + NADH. It participates in nitrogen metabolism; nitric oxide reduction. In terms of biological role, one of at least two accessory proteins for anaerobic nitric oxide (NO) reductase. Reduces the rubredoxin moiety of NO reductase. The sequence is that of Nitric oxide reductase FlRd-NAD(+) reductase from Aeromonas salmonicida (strain A449).